We begin with the raw amino-acid sequence, 235 residues long: Aspartate/glutamate leucyltransferase (235 aa).

Belongs to the R-transferase family. Bpt subfamily.

The protein localises to the cytoplasm. It catalyses the reaction N-terminal L-glutamyl-[protein] + L-leucyl-tRNA(Leu) = N-terminal L-leucyl-L-glutamyl-[protein] + tRNA(Leu) + H(+). The catalysed reaction is N-terminal L-aspartyl-[protein] + L-leucyl-tRNA(Leu) = N-terminal L-leucyl-L-aspartyl-[protein] + tRNA(Leu) + H(+). In terms of biological role, functions in the N-end rule pathway of protein degradation where it conjugates Leu from its aminoacyl-tRNA to the N-termini of proteins containing an N-terminal aspartate or glutamate. The protein is Aspartate/glutamate leucyltransferase of Pseudomonas fluorescens (strain ATCC BAA-477 / NRRL B-23932 / Pf-5).